A 359-amino-acid polypeptide reads, in one-letter code: DNA-directed RNA polymerase RPB3-11 homolog (359 aa).

This sequence in the N-terminal section; belongs to the archaeal RpoD/eukaryotic RPB3 RNA polymerase subunit family. It in the C-terminal section; belongs to the archaeal RpoL/eukaryotic RPB11/RPC19 RNA polymerase subunit family. As to quaternary structure, part of the viral DNA-directed RNA polymerase that consists of 8 polII-like subunits (RPB1, RPB2, RPB3, RPB5, RPB6, RPB7, RPB9, RPB10), a capping enzyme and a termination factor.

The protein resides in the host cytoplasm. The protein localises to the virion. In terms of biological role, component of the DNA-directed RNA polymerase (RNAP) that catalyzes the transcription in the cytoplasm of viral DNA into RNA using the four ribonucleoside triphosphates as substrates. This is DNA-directed RNA polymerase RPB3-11 homolog from Ornithodoros (relapsing fever ticks).